A 305-amino-acid polypeptide reads, in one-letter code: Acetaldehyde dehydrogenase (305 aa).

An NAD(+)-binding site is contributed by 13–16; it reads SGNI. C128 serves as the catalytic Acyl-thioester intermediate. NAD(+)-binding positions include 159-167 and N278; that span reads SAGPGTRQN.

The protein belongs to the acetaldehyde dehydrogenase family.

It carries out the reaction acetaldehyde + NAD(+) + CoA = acetyl-CoA + NADH + H(+). The polypeptide is Acetaldehyde dehydrogenase (Roseiflexus sp. (strain RS-1)).